A 208-amino-acid polypeptide reads, in one-letter code: Small ribosomal subunit protein eS8 (208 aa).

Positions 1-34 are disordered; sequence MGISRDHWHKRRATGGKRAPIRKKRKYELGRPAA. Positions 7 to 26 are enriched in basic residues; that stretch reads HWHKRRATGGKRAPIRKKRK.

The protein belongs to the eukaryotic ribosomal protein eS8 family. As to quaternary structure, component of the small ribosomal subunit. Identified in a IGF2BP1-dependent mRNP granule complex containing untranslated mRNAs. Part of the small subunit (SSU) processome, composed of more than 70 proteins and the RNA chaperone small nucleolar RNA (snoRNA) U3.

It localises to the cytoplasm. It is found in the membrane. The protein localises to the nucleus. The protein resides in the nucleolus. In terms of biological role, component of the small ribosomal subunit. The ribosome is a large ribonucleoprotein complex responsible for the synthesis of proteins in the cell. Part of the small subunit (SSU) processome, first precursor of the small eukaryotic ribosomal subunit. During the assembly of the SSU processome in the nucleolus, many ribosome biogenesis factors, an RNA chaperone and ribosomal proteins associate with the nascent pre-rRNA and work in concert to generate RNA folding, modifications, rearrangements and cleavage as well as targeted degradation of pre-ribosomal RNA by the RNA exosome. The sequence is that of Small ribosomal subunit protein eS8 (RpS8) from Spodoptera frugiperda (Fall armyworm).